The chain runs to 179 residues: DELTA-miturgitoxin-Cp2a (179 aa).

A signal peptide spans 1–20 (MKFSLFFGVLFLAILHSCLS). Positions 21-47 (ESEKDLTDEDHFRSSDSFLSEIQEESR) are excised as a propeptide. A Processing quadruplet motif motif is present at residues 44-47 (EESR). 8 cysteine pairs are disulfide-bonded: cysteine 51-cysteine 66, cysteine 58-cysteine 75, cysteine 65-cysteine 88, cysteine 77-cysteine 86, cysteine 115-cysteine 130, cysteine 122-cysteine 139, cysteine 129-cysteine 158, and cysteine 141-cysteine 156. Valine 178 is subject to Valine amide.

Belongs to the spider toxin CSTX family. Double-CSTX subfamily. Cleavage of the propeptide depends on the processing quadruplet motif (XXXR, with at least one of X being E). As to expression, expressed by the venom gland.

It is found in the secreted. In terms of biological role, spider venom toxin that exhibits cytolytic activity by forming an alpha-helix across the membrane. Lethal to insect larvae. In Cheiracanthium punctorium (Yellow sac spider), this protein is DELTA-miturgitoxin-Cp2a.